Here is a 1347-residue protein sequence, read N- to C-terminus: BTB/POZ domain-containing protein 1 (1347 aa).

ANK repeat units follow at residues 51–81 and 86–115; these read YGRT…DVFV and SGYT…SFRS. RCC1 repeat units lie at residues 148–198, 215–264, 265–322, and 324–372; these read GNEL…DKIL, SQNV…ALTK, FGSI…AWTD, and DIYS…CLLQ. 2 consecutive BTB domains span residues 619 to 698 and 758 to 829; these read SDVT…LSPW and MDTV…VELF. Disordered stretches follow at residues 1006-1029, 1104-1139, 1193-1237, and 1286-1347; these read SSNQ…NVVN, EKAD…SKQV, EGSS…PLSI, and GILK…RAVK. Residues 1013-1023 show a composition bias toward basic and acidic residues; it reads LNKEDAEEKSP. 2 stretches are compositionally biased toward polar residues: residues 1208-1237 and 1297-1306; these read SNGS…PLSI and NRKQGQASKQ. Basic residues predominate over residues 1336–1347; that stretch reads TTHKKGKARAVK.

Interacts with cul3.

It functions in the pathway protein modification; protein ubiquitination. Functionally, probable substrate-specific adapter of an E3 ubiquitin-protein ligase complex which mediates the ubiquitination and subsequent proteasomal degradation of target proteins. This is BTB/POZ domain-containing protein 1 (btb1) from Schizosaccharomyces pombe (strain 972 / ATCC 24843) (Fission yeast).